We begin with the raw amino-acid sequence, 629 residues long: Embryonic polyadenylate-binding protein A (629 aa).

RRM domains lie at 11-89, 99-175, 191-268, and 294-370; these read ASLY…WSQR, GNVF…HFKS, TNVY…RAQK, and VNLY…LAQR. One can recognise a PABC domain in the interval 539 to 616; that stretch reads QEPLTASLLA…AVAVLQAHQA (78 aa).

It belongs to the polyadenylate-binding protein type-1 family. In terms of assembly, interacts with dazl in an RNA-independent manner. The C-terminus can self-associate and also interact with the C-terminus of pabpc1, independently of RNA. RRM 1 and RRM 2 interact with both eif4g1 and paip1, and the C-terminus also interacts with paip1. Prior to oocyte maturation, found in a complex with dazl and pum2 proteins and spdy1 mRNA; pum2 dissociates from the complex during maturation. Interacts with the translation termination factor sup35/erf3. In terms of tissue distribution, expressed in adult testis, but at a reduced level compared to oocytes.

It localises to the cytoplasm. Its function is as follows. Binds and protects the poly(A) tail of mRNA with or without an AU-rich element (ARE) and prevents mRNA deadenylation. Stimulates the translation of mRNAs to which it is bound during early development. This is Embryonic polyadenylate-binding protein A (epabp-a) from Xenopus laevis (African clawed frog).